The primary structure comprises 446 residues: N-succinylarginine dihydrolase (446 aa).

Substrate is bound by residues 19-28, asparagine 110, and 137-138; these read AGLSFGNVAS and HR. Residue glutamate 174 is part of the active site. Residue arginine 213 participates in substrate binding. The active site involves histidine 249. Positions 251 and 364 each coordinate substrate. The active-site Nucleophile is cysteine 370.

This sequence belongs to the succinylarginine dihydrolase family. As to quaternary structure, homodimer.

The enzyme catalyses N(2)-succinyl-L-arginine + 2 H2O + 2 H(+) = N(2)-succinyl-L-ornithine + 2 NH4(+) + CO2. The protein operates within amino-acid degradation; L-arginine degradation via AST pathway; L-glutamate and succinate from L-arginine: step 2/5. Its function is as follows. Catalyzes the hydrolysis of N(2)-succinylarginine into N(2)-succinylornithine, ammonia and CO(2). The protein is N-succinylarginine dihydrolase of Paraburkholderia xenovorans (strain LB400).